Consider the following 365-residue polypeptide: Phosphoserine aminotransferase (365 aa).

R40 contributes to the L-glutamate binding site. Pyridoxal 5'-phosphate is bound by residues 74 to 75 (AS), F99, T155, D177, and Q200. An N6-(pyridoxal phosphate)lysine modification is found at K201. 241–242 (NT) is a binding site for pyridoxal 5'-phosphate.

Belongs to the class-V pyridoxal-phosphate-dependent aminotransferase family. SerC subfamily. In terms of assembly, homodimer. Pyridoxal 5'-phosphate serves as cofactor.

Its subcellular location is the cytoplasm. It catalyses the reaction O-phospho-L-serine + 2-oxoglutarate = 3-phosphooxypyruvate + L-glutamate. The enzyme catalyses 4-(phosphooxy)-L-threonine + 2-oxoglutarate = (R)-3-hydroxy-2-oxo-4-phosphooxybutanoate + L-glutamate. The protein operates within amino-acid biosynthesis; L-serine biosynthesis; L-serine from 3-phospho-D-glycerate: step 2/3. Catalyzes the reversible conversion of 3-phosphohydroxypyruvate to phosphoserine and of 3-hydroxy-2-oxo-4-phosphonooxybutanoate to phosphohydroxythreonine. This is Phosphoserine aminotransferase from Lactococcus lactis subsp. cremoris (strain SK11).